The following is a 1372-amino-acid chain: DNA-directed RNA polymerase subunit beta' (1372 aa).

Positions 69, 71, 84, and 87 each coordinate Zn(2+). Mg(2+) contacts are provided by D460, D462, and D464. Zn(2+) contacts are provided by C808, C882, C889, and C892.

The protein belongs to the RNA polymerase beta' chain family. In terms of assembly, the RNAP catalytic core consists of 2 alpha, 1 beta, 1 beta' and 1 omega subunit. When a sigma factor is associated with the core the holoenzyme is formed, which can initiate transcription. It depends on Mg(2+) as a cofactor. Requires Zn(2+) as cofactor.

The catalysed reaction is RNA(n) + a ribonucleoside 5'-triphosphate = RNA(n+1) + diphosphate. In terms of biological role, DNA-dependent RNA polymerase catalyzes the transcription of DNA into RNA using the four ribonucleoside triphosphates as substrates. In Rickettsia akari (strain Hartford), this protein is DNA-directed RNA polymerase subunit beta'.